The chain runs to 670 residues: DNA mismatch repair protein MutL (670 aa).

The tract at residues serine 363–histidine 451 is disordered. The span at glutamate 379 to alanine 389 shows a compositional bias: basic and acidic residues.

The protein belongs to the DNA mismatch repair MutL/HexB family.

This protein is involved in the repair of mismatches in DNA. It is required for dam-dependent methyl-directed DNA mismatch repair. May act as a 'molecular matchmaker', a protein that promotes the formation of a stable complex between two or more DNA-binding proteins in an ATP-dependent manner without itself being part of a final effector complex. The polypeptide is DNA mismatch repair protein MutL (Syntrophobacter fumaroxidans (strain DSM 10017 / MPOB)).